Reading from the N-terminus, the 701-residue chain is Rab-like protein 6 (701 aa).

N-acetylmethionine is present on Met1. The interval 39–279 (GVQYNMKIVI…IFLEMMEARS (241 aa)) is small GTPase-like. Residues 50-57 (GDRNTGKT), 100-104 (DVVDK), and 177-179 (YRD) each bind GTP. The tract at residues 279-701 (SRGHASPLTT…LRGGGDYEAL (423 aa)) is disordered. A compositionally biased stretch (low complexity) spans 284-315 (SPLTTSGQSPSSGSQSPVVPPSTVSTGSSSPS). Positions 316 to 344 (TPQPVLQPPLQAPPAPPAPAEAPPLPAAP) are enriched in pro residues. Phosphoserine is present on residues Ser394, Ser416, Ser418, Ser461, and Ser462. A compositionally biased stretch (low complexity) spans 495–506 (ALGPPRDAAPRA). The residue at position 552 (Ser552) is a Phosphoserine. Basic and acidic residues predominate over residues 555–569 (DAQRRAGEFPVREDL). Ser570 bears the Phosphoserine mark. Thr573 carries the phosphothreonine modification. Residues 580–589 (VQPPAPPKPL) are compositionally biased toward pro residues. A compositionally biased stretch (basic and acidic residues) spans 608–626 (EPGREDSSEQDKEGRPPAK). Phosphoserine is present on residues Ser614 and Ser615. The tract at residues 629–667 (KKKKKKGREEEDKAAKKRSKHKKSRERADDKGRDERRRR) is interaction with CDKN2A. A compositionally biased stretch (basic residues) spans 643–653 (AKKRSKHKKSR). The segment covering 654-665 (ERADDKGRDERR) has biased composition (basic and acidic residues). Residues 683 to 701 (LGGGAPSGPLRGGGDYEAL) show a composition bias toward gly residues.

This sequence belongs to the small GTPase superfamily. Rab family.

It localises to the nucleus. The protein resides in the cytoplasm. Functionally, may enhance cellular proliferation. May reduce growth inhibitory activity of CDKN2A. This is Rab-like protein 6 (RABL6) from Bos taurus (Bovine).